A 564-amino-acid polypeptide reads, in one-letter code: Interactor of constitutive active ROPs 3 (564 aa).

Disordered regions lie at residues 1-73 (MQTQ…SRIT) and 88-135 (KAKD…SALE). Over residues 33–44 (ESSSSPISATNR) the composition is skewed to polar residues. Composition is skewed to basic and acidic residues over residues 63 to 73 (VSEKKRPSRIT) and 98 to 123 (TSKK…KLEE). 2 coiled-coil regions span residues 70-133 (SRIT…ETSA) and 231-514 (AETE…AATA). Ser533 is subject to Phosphoserine.

Belongs to the ICR family. Interacts with ARAC11 in vitro. As to expression, expressed in flowers.

Its function is as follows. Acts as a scaffold, mediating interaction of ROPs with different proteins. This Arabidopsis thaliana (Mouse-ear cress) protein is Interactor of constitutive active ROPs 3 (ICR3).